A 193-amino-acid polypeptide reads, in one-letter code: Probable nicotinate-nucleotide adenylyltransferase (193 aa).

Belongs to the NadD family.

The catalysed reaction is nicotinate beta-D-ribonucleotide + ATP + H(+) = deamido-NAD(+) + diphosphate. It functions in the pathway cofactor biosynthesis; NAD(+) biosynthesis; deamido-NAD(+) from nicotinate D-ribonucleotide: step 1/1. In terms of biological role, catalyzes the reversible adenylation of nicotinate mononucleotide (NaMN) to nicotinic acid adenine dinucleotide (NaAD). The polypeptide is Probable nicotinate-nucleotide adenylyltransferase (Fusobacterium nucleatum subsp. nucleatum (strain ATCC 25586 / DSM 15643 / BCRC 10681 / CIP 101130 / JCM 8532 / KCTC 2640 / LMG 13131 / VPI 4355)).